A 1602-amino-acid polypeptide reads, in one-letter code: Mediator of RNA polymerase II transcription subunit 26 (1602 aa).

Residues 8 to 85 form the TFIIS N-terminal domain; the sequence is QLTSHLSQAL…KMWREMVGIQ (78 aa). 5 disordered regions span residues 86-108, 238-298, 399-481, 580-617, and 694-736; these read QTAN…PSAH, VTDS…AQNE, EDSI…KGVD, FSNK…SLDS, and SDNG…MDTP. Basic residues predominate over residues 273–285; it reads RPKKFKKDKKHKE. Residues 401–414 are compositionally biased toward polar residues; sequence SITNDSSTSCSRLS. Positions 418–431 are enriched in basic and acidic residues; sequence VEERRKSDKIDDSI. Positions 467 to 477 are enriched in basic residues; sequence VPKKRGRKKGS. Polar residues predominate over residues 587 to 604; sequence AGNTDSDTITSEPSQDSN. Positions 715 to 728 are enriched in basic and acidic residues; that stretch reads KQEEQLPKLERLSD. Residues 792–820 are a coiled coil; that stretch reads LDVASVNADTVQNQINSHNQEGETSEEQN. 2 disordered regions span residues 1035-1158 and 1372-1407; these read FEET…EVEN and NTSA…NESD. Low complexity predominate over residues 1056 to 1070; sequence SSSSNSSCSNSSNSS. Residues 1073 to 1083 show a composition bias toward basic and acidic residues; sequence KTQDSINEKLR. Basic residues predominate over residues 1101–1112; the sequence is RKRRGKNRKKRN. Positions 1124–1143 are enriched in low complexity; that stretch reads ISLNGTISNLSSSNNSSSSE. Over residues 1144-1158 the composition is skewed to acidic residues; sequence SETETGLENENEVEN. Residues 1378 to 1388 show a composition bias toward basic and acidic residues; that stretch reads TVSEDPLKIEE.

This sequence belongs to the Mediator complex subunit 26 family. Component of the Mediator complex.

It localises to the nucleus. Component of the Mediator complex, a coactivator involved in the regulated transcription of nearly all RNA polymerase II-dependent genes. Mediator functions as a bridge to convey information from gene-specific regulatory proteins to the basal RNA polymerase II transcription machinery. Mediator is recruited to promoters by direct interactions with regulatory proteins and serves as a scaffold for the assembly of a functional preinitiation complex with RNA polymerase II and the general transcription factors. This Drosophila pseudoobscura pseudoobscura (Fruit fly) protein is Mediator of RNA polymerase II transcription subunit 26 (MED26).